Consider the following 231-residue polypeptide: tRNA (guanine-N(1)-)-methyltransferase (231 aa).

Residues glycine 109 and 133–138 (IGDYVL) each bind S-adenosyl-L-methionine.

It belongs to the RNA methyltransferase TrmD family. In terms of assembly, homodimer.

The protein resides in the cytoplasm. It carries out the reaction guanosine(37) in tRNA + S-adenosyl-L-methionine = N(1)-methylguanosine(37) in tRNA + S-adenosyl-L-homocysteine + H(+). In terms of biological role, specifically methylates guanosine-37 in various tRNAs. This is tRNA (guanine-N(1)-)-methyltransferase from Nocardia farcinica (strain IFM 10152).